Here is a 484-residue protein sequence, read N- to C-terminus: UDP-N-acetylmuramate--L-alanine ligase (484 aa).

Residue Gly-127–Thr-133 coordinates ATP.

This sequence belongs to the MurCDEF family.

It is found in the cytoplasm. It catalyses the reaction UDP-N-acetyl-alpha-D-muramate + L-alanine + ATP = UDP-N-acetyl-alpha-D-muramoyl-L-alanine + ADP + phosphate + H(+). The protein operates within cell wall biogenesis; peptidoglycan biosynthesis. Its function is as follows. Cell wall formation. This is UDP-N-acetylmuramate--L-alanine ligase from Shewanella amazonensis (strain ATCC BAA-1098 / SB2B).